A 568-amino-acid polypeptide reads, in one-letter code: Arginine--tRNA ligase (568 aa).

Residues 129–139 (ANPTGPLHIGH) carry the 'HIGH' region motif.

Belongs to the class-I aminoacyl-tRNA synthetase family. In terms of assembly, monomer.

It localises to the cytoplasm. The enzyme catalyses tRNA(Arg) + L-arginine + ATP = L-arginyl-tRNA(Arg) + AMP + diphosphate. This chain is Arginine--tRNA ligase, found in Wolbachia pipientis wMel.